The primary structure comprises 180 residues: Inner membrane-spanning protein YciB (180 aa).

The next 5 membrane-spanning stretches (helical) occupy residues 22–42 (IYVA…LTWL), 50–70 (MTLI…VFHN), 76–96 (WKVT…QVVL), 121–141 (AAWA…AFWL), and 149–169 (FKVF…GIYI).

This sequence belongs to the YciB family.

The protein resides in the cell inner membrane. Plays a role in cell envelope biogenesis, maintenance of cell envelope integrity and membrane homeostasis. The chain is Inner membrane-spanning protein YciB from Edwardsiella ictaluri (strain 93-146).